Reading from the N-terminus, the 130-residue chain is Movement protein TGB2 (130 aa).

Topologically, residues 1 to 12 (MPGLTPPVNYEQ) are cytoplasmic. The helical transmembrane segment at 13-30 (VYKVLAIGFLLCASIYCL) threads the bilayer. Residues 31-72 (RSNHLPHVGDNIHSLPHGGNYADGTKRVQYFRPHSSTSTNHK) lie on the Lumenal side of the membrane. The chain crosses the membrane as a helical span at residues 73 to 90 (YTALCAVLTLSLLIFAQT). The Cytoplasmic portion of the chain corresponds to 91–130 (RLAAGNRITSVSICHHCSSQGSLSGGNHGRVSGHSELPTT). Residues 110 to 130 (QGSLSGGNHGRVSGHSELPTT) form a disordered region.

It belongs to the Tymovirales TGBp2 protein family.

Its subcellular location is the host endoplasmic reticulum membrane. Plays a role in viral cell-to-cell propagation, by facilitating genome transport to neighboring plant cells through plasmosdesmata,. The chain is Movement protein TGB2 from Narcissus pseudonarcissus (Daffodil).